Consider the following 327-residue polypeptide: Lipoyl synthase (327 aa).

7 residues coordinate [4Fe-4S] cluster: cysteine 74, cysteine 79, cysteine 85, cysteine 100, cysteine 104, cysteine 107, and serine 314. The Radical SAM core domain maps to phenylalanine 86–lysine 303.

This sequence belongs to the radical SAM superfamily. Lipoyl synthase family. [4Fe-4S] cluster is required as a cofactor.

The protein resides in the cytoplasm. It catalyses the reaction [[Fe-S] cluster scaffold protein carrying a second [4Fe-4S](2+) cluster] + N(6)-octanoyl-L-lysyl-[protein] + 2 oxidized [2Fe-2S]-[ferredoxin] + 2 S-adenosyl-L-methionine + 4 H(+) = [[Fe-S] cluster scaffold protein] + N(6)-[(R)-dihydrolipoyl]-L-lysyl-[protein] + 4 Fe(3+) + 2 hydrogen sulfide + 2 5'-deoxyadenosine + 2 L-methionine + 2 reduced [2Fe-2S]-[ferredoxin]. The protein operates within protein modification; protein lipoylation via endogenous pathway; protein N(6)-(lipoyl)lysine from octanoyl-[acyl-carrier-protein]: step 2/2. In terms of biological role, catalyzes the radical-mediated insertion of two sulfur atoms into the C-6 and C-8 positions of the octanoyl moiety bound to the lipoyl domains of lipoate-dependent enzymes, thereby converting the octanoylated domains into lipoylated derivatives. This chain is Lipoyl synthase, found in Pseudomonas paraeruginosa (strain DSM 24068 / PA7) (Pseudomonas aeruginosa (strain PA7)).